A 518-amino-acid chain; its full sequence is Phosphoacetylglucosamine mutase 1 (518 aa).

Thr-49 is subject to Phosphothreonine. Residue Ser-51 is the Phosphoserine intermediate of the active site. Ser-51, Asp-267, Asp-269, and Asp-271 together coordinate Mg(2+). A Phosphoserine modification is found at Ser-51. Substrate-binding positions include 360–362, 486–490, and Arg-495; these read EAN and RASGT.

The protein belongs to the phosphohexose mutase family. It depends on Mg(2+) as a cofactor.

It is found in the cytoplasm. Its subcellular location is the nucleus. The catalysed reaction is N-acetyl-alpha-D-glucosamine 1-phosphate = N-acetyl-D-glucosamine 6-phosphate. Its pathway is nucleotide-sugar biosynthesis; UDP-N-acetyl-alpha-D-glucosamine biosynthesis; N-acetyl-alpha-D-glucosamine 1-phosphate from alpha-D-glucosamine 6-phosphate (route I): step 2/2. Functionally, catalyzes the conversion of GlcNAc-6-P into GlcNAc-1-P during the synthesis of uridine diphosphate/UDP-GlcNAc, which is a biosynthetic precursor of chitin and also supplies the amino sugars for N-linked oligosaccharides of glycoproteins. The polypeptide is Phosphoacetylglucosamine mutase 1 (Schizosaccharomyces pombe (strain 972 / ATCC 24843) (Fission yeast)).